The following is a 178-amino-acid chain: Caveolin-1 (178 aa).

Ser-2 carries the post-translational modification N-acetylserine. Residue Ser-2 is modified to Phosphoserine. The segment at Ser-2–Val-94 is required for homooligomerization. The Cytoplasmic segment spans residues Ser-2 to Ser-104. An N6-acetyllysine; alternate modification is found at Lys-5. Lys-5 is covalently cross-linked (Glycyl lysine isopeptide (Lys-Gly) (interchain with G-Cter in ubiquitin); alternate). Tyr-6 carries the phosphotyrosine modification. The residue at position 9 (Ser-9) is a Phosphoserine. Residue Tyr-14 is modified to Phosphotyrosine; by ABL1. Tyr-25 bears the Phosphotyrosine mark. Glycyl lysine isopeptide (Lys-Gly) (interchain with G-Cter in ubiquitin) cross-links involve residues Lys-26, Lys-30, Lys-39, Lys-47, and Lys-57. Positions Asp-82–Val-94 are interaction with CAVIN3. Positions Thr-105 to Leu-125 form an intramembrane region, helical. The Cytoplasmic portion of the chain corresponds to His-126–Ile-178. The tract at residues Val-131 to Gln-142 is interacts with SPRY1, SPRY2, SPRY3 and SPRY4. S-palmitoyl cysteine attachment occurs at residues Cys-133, Cys-143, and Cys-156. The interacts with SPRY1, SPRY2, and SPRY4 stretch occupies residues Ser-149–Phe-160. The interval Phe-167 to Ile-178 is interacts with SPRY1, SPRY2, SPRY3 and SPRY4.

Belongs to the caveolin family. In terms of assembly, homooligomer. Interacts with GLIPR2. Interacts with NOSTRIN. Interacts with SNAP25 and STX1A. Interacts (via the N-terminus) with DPP4; the interaction is direct. Interacts with CTNNB1, CDH1 and JUP. Interacts with PACSIN2; this interaction induces membrane tubulation. Interacts with SLC7A9. Interacts with BMX and BTK. Interacts with TGFBR1. Interacts with CAVIN3 (via leucine-zipper domain) in a cholesterol-sensitive manner. Interacts with CAVIN1. Interacts with EHD2 in a cholesterol-dependent manner. Forms a ternary complex with UBXN6 and VCP; mediates CAV1 targeting to lysosomes for degradation. Interacts with ABCG1; this interaction regulates ABCG1-mediated cholesterol efflux. Interacts with NEU3; this interaction enhances NEU3 sialidase activity within caveola. Interacts (via C-terminus) with SPRY1, SPRY2 (via C-terminus), SPRY3, and SPRY4. Interacts with IGFBP5; this interaction allows trafficking of IGFBP5 from the plasma membrane to the nucleus. In terms of processing, phosphorylated at Tyr-14 by ABL1 in response to oxidative stress. Post-translationally, ubiquitinated. Undergo monoubiquitination and multi- and/or polyubiquitination. Monoubiquitination of N-terminal lysines promotes integration in a ternary complex with UBXN6 and VCP which promotes oligomeric CAV1 targeting to lysosomes for degradation. Ubiquitinated by ZNRF1; leading to degradation and modulation of the TLR4-mediated immune response.

The protein localises to the golgi apparatus membrane. It is found in the cell membrane. Its subcellular location is the membrane. The protein resides in the caveola. It localises to the membrane raft. Functionally, may act as a scaffolding protein within caveolar membranes. Forms a stable heterooligomeric complex with CAV2 that targets to lipid rafts and drives caveolae formation. Mediates the recruitment of CAVIN proteins (CAVIN1/2/3/4) to the caveolae. Interacts directly with G-protein alpha subunits and can functionally regulate their activity. Involved in the costimulatory signal essential for T-cell receptor (TCR)-mediated T-cell activation. Its binding to DPP4 induces T-cell proliferation and NF-kappa-B activation in a T-cell receptor/CD3-dependent manner. Recruits CTNNB1 to caveolar membranes and may regulate CTNNB1-mediated signaling through the Wnt pathway. Negatively regulates TGFB1-mediated activation of SMAD2/3 by mediating the internalization of TGFBR1 from membrane rafts leading to its subsequent degradation. Binds 20(S)-hydroxycholesterol (20(S)-OHC). The protein is Caveolin-1 (CAV1) of Dasypus novemcinctus (Nine-banded armadillo).